The primary structure comprises 243 residues: HTH-type transcriptional regulator MlrA (243 aa).

Residues 3–72 enclose the HTH merR-type domain; the sequence is LYTIGEVALL…VSKVKMLLSN (70 aa). The H-T-H motif DNA-binding region spans 6–25; that stretch reads IGEVALLCDINPVTLRAWQR.

As to quaternary structure, interacts with DgcM and PdeR.

Activity is regulated by DgcM and PdeR. Its function is as follows. Activates transcription of csgD, the master regulator of biofilm formation, by binding to its promoter region. Also controls the transcription of cadC and ibaG. Part of a signaling cascade that regulates curli biosynthesis. The cascade is composed of two c-di-GMP control modules, in which c-di-GMP controlled by the DgcE/PdeH pair (module I) regulates the activity of the DgcM/PdeR pair (module II), which in turn regulates activity of the transcription factor MlrA. The sequence is that of HTH-type transcriptional regulator MlrA from Escherichia coli (strain K12).